A 347-amino-acid chain; its full sequence is NADH-ubiquinone oxidoreductase chain 2 (347 aa).

11 helical membrane-spanning segments follow: residues 5–22 (ILIT…IVLF), 26–45 (WFMI…PILM), 60–80 (FLTQ…NLLC), 96–116 (TMIT…FWVP), 122–142 (ISLS…LSIL), 153–173 (LLLM…LNQT), 178–198 (ILAY…VYNP), 200–220 (LAIL…MLFM), 237–257 (FPLM…LPPL), 274–294 (DMII…YFYT), and 325–345 (LLAP…MLAA).

The protein belongs to the complex I subunit 2 family. As to quaternary structure, core subunit of respiratory chain NADH dehydrogenase (Complex I) which is composed of 45 different subunits. Interacts with TMEM242.

It localises to the mitochondrion inner membrane. The catalysed reaction is a ubiquinone + NADH + 5 H(+)(in) = a ubiquinol + NAD(+) + 4 H(+)(out). In terms of biological role, core subunit of the mitochondrial membrane respiratory chain NADH dehydrogenase (Complex I) which catalyzes electron transfer from NADH through the respiratory chain, using ubiquinone as an electron acceptor. Essential for the catalytic activity and assembly of complex I. This is NADH-ubiquinone oxidoreductase chain 2 from Ailuropoda melanoleuca (Giant panda).